The chain runs to 296 residues: Meiotically up-regulated gene 2 protein (296 aa).

The protein belongs to the UPF0612 family.

It localises to the cytoplasm. The protein resides in the nucleus. Has a role in meiosis. In Schizosaccharomyces pombe (strain 972 / ATCC 24843) (Fission yeast), this protein is Meiotically up-regulated gene 2 protein (mug2).